The sequence spans 551 residues: uncharacterized protein (551 aa).

Disordered stretches follow at residues 66 to 111, 130 to 165, 180 to 229, and 277 to 303; these read GNNK…STNL, PEAT…EKSN, AFNP…LSNL, and AFTS…VPLS. Position 74 is a phosphoserine (Ser-74). Polar residues-rich tracts occupy residues 92–111 and 143–156; these read GFSN…STNL and VVNT…GTQE. Positions 182-193 are enriched in low complexity; the sequence is NPSSVLPSNSSS. Residues 204-226 show a composition bias toward polar residues; the sequence is KETYQPNTFRRSPLKNDTGSVEL. Over residues 290 to 299 the composition is skewed to low complexity; it reads TRPSSTRFPS.

This is an uncharacterized protein from Schizosaccharomyces pombe (strain 972 / ATCC 24843) (Fission yeast).